A 179-amino-acid polypeptide reads, in one-letter code: Crossover junction endodeoxyribonuclease RuvC (179 aa).

Active-site residues include Asp14, Glu74, and Asp147. Positions 14, 74, and 147 each coordinate Mg(2+).

Belongs to the RuvC family. In terms of assembly, homodimer which binds Holliday junction (HJ) DNA. The HJ becomes 2-fold symmetrical on binding to RuvC with unstacked arms; it has a different conformation from HJ DNA in complex with RuvA. In the full resolvosome a probable DNA-RuvA(4)-RuvB(12)-RuvC(2) complex forms which resolves the HJ. It depends on Mg(2+) as a cofactor.

It localises to the cytoplasm. The enzyme catalyses Endonucleolytic cleavage at a junction such as a reciprocal single-stranded crossover between two homologous DNA duplexes (Holliday junction).. Functionally, the RuvA-RuvB-RuvC complex processes Holliday junction (HJ) DNA during genetic recombination and DNA repair. Endonuclease that resolves HJ intermediates. Cleaves cruciform DNA by making single-stranded nicks across the HJ at symmetrical positions within the homologous arms, yielding a 5'-phosphate and a 3'-hydroxyl group; requires a central core of homology in the junction. The consensus cleavage sequence is 5'-(A/T)TT(C/G)-3'. Cleavage occurs on the 3'-side of the TT dinucleotide at the point of strand exchange. HJ branch migration catalyzed by RuvA-RuvB allows RuvC to scan DNA until it finds its consensus sequence, where it cleaves and resolves the cruciform DNA. The protein is Crossover junction endodeoxyribonuclease RuvC of Rubrobacter xylanophilus (strain DSM 9941 / JCM 11954 / NBRC 16129 / PRD-1).